The chain runs to 141 residues: Mite group 2 allergen Lep d 2 (141 aa).

A signal peptide spans 1–16; it reads MMKFIALFALVAVASA. Intrachain disulfides connect cysteine 24–cysteine 133, cysteine 37–cysteine 42, and cysteine 88–cysteine 93. Repeat copies occupy residues 64 to 65, 68 to 69, and 72 to 73. Positions 64–73 are 3 X 2 AA repeats of K-V; it reads KVTIKVLAKV.

The protein belongs to the NPC2 family. In terms of assembly, monomer.

The protein resides in the secreted. This is Mite group 2 allergen Lep d 2 from Lepidoglyphus destructor (Storage mite).